The chain runs to 488 residues: G-patch domain and KOW motifs-containing protein (488 aa).

Positions 1–11 are enriched in pro residues; it reads MAGRESPPPSA. The interval 1–20 is disordered; the sequence is MAGRESPPPSAPSMAPISFG. A2 carries the post-translational modification N-acetylalanine. S25 is modified (phosphoserine; by PKA). Residues 72–97 form a disordered region; it reads IQNGSRRQPLSKNPKPSSETSTVLMS. Polar residues predominate over residues 73–95; sequence QNGSRRQPLSKNPKPSSETSTVL. Phosphoserine is present on S115. Residues 164 to 210 form the G-patch domain; that stretch reads VEAYGLAMLRGMGWKPGKGIGNTFSQVVKPRVNSIRPKGLGLGANRM. Disordered stretches follow at residues 216–241 and 295–367; these read ASVG…PQGL and QEFD…PRNK. Over residues 224–236 the composition is skewed to basic and acidic residues; it reads PRPDGDRENDKEG. The KOW 1 domain maps to 231–258; the sequence is ENDKEGQPQGLMHGRAVVVLSGPYRGLY. The span at 307–331 shows a compositional bias: polar residues; it reads VSQTSTEQQNRATGTASSLKAAQNQ. 2 stretches are compositionally biased toward basic and acidic residues: residues 332-341 and 349-363; these read EDSKRRQKGS and PDRQ…EKAA. One can recognise a KOW 2 domain in the interval 401-428; it reads PDTCVCRTDEGRVLEDVREDMLETLIPK. Position 485 is a phosphoserine (S485).

The protein belongs to the MOS2 family. Component of the minor spliceosome, which splices U12-type introns. Interacts with PRKX, PRKACB and DHX16. Phosphorylation regulates its ability to bind RNA.

Its subcellular location is the nucleus. Its function is as follows. RNA-binding protein involved in pre-mRNA splicing. As a component of the minor spliceosome, involved in the splicing of U12-type introns in pre-mRNAs. This is G-patch domain and KOW motifs-containing protein (Gpkow) from Mus musculus (Mouse).